The following is a 347-amino-acid chain: Very-long-chain 3-oxoacyl-CoA reductase (347 aa).

The helical transmembrane segment at Leu-20 to Leu-40 threads the bilayer. Residues Asp-120, Asn-147, Tyr-223, Lys-227, Val-256, and Ser-258 each coordinate NADP(+). Tyr-223 acts as the Proton donor in catalysis. Lys-227 acts as the Lowers pKa of active site Tyr in catalysis.

The protein belongs to the short-chain dehydrogenases/reductases (SDR) family. As to quaternary structure, interacts with the fatty acid elongation system components ELO3 and TSC13.

It is found in the endoplasmic reticulum membrane. It carries out the reaction a very-long-chain (3R)-3-hydroxyacyl-CoA + NADP(+) = a very-long-chain 3-oxoacyl-CoA + NADPH + H(+). The catalysed reaction is 3-oxooctadecanoyl-CoA + NADPH + H(+) = (3R)-hydroxyoctadecanoyl-CoA + NADP(+). It catalyses the reaction 3-oxoeicosanoyl-CoA + NADPH + H(+) = (3R)-hydroxyeicosanoyl-CoA + NADP(+). The enzyme catalyses 3-oxodocosanoyl-CoA + NADPH + H(+) = (3R)-hydroxydocosanoyl-CoA + NADP(+). It carries out the reaction 3-oxotetracosanoyl-CoA + NADPH + H(+) = (3R)-hydroxytetracosanoyl-CoA + NADP(+). The catalysed reaction is 3-oxohexacosanoyl-CoA + NADPH + H(+) = (3R)-hydroxyhexacosanoyl-CoA + NADP(+). The protein operates within lipid metabolism; fatty acid biosynthesis. In terms of biological role, component of the microsomal membrane bound fatty acid elongation system, which produces the 26-carbon very long-chain fatty acids (VLCFA) from palmitate. Catalyzes the reduction of the 3-ketoacyl-CoA intermediate that is formed in each cycle of fatty acid elongation. VLCFAs serve as precursors for ceramide and sphingolipids. The polypeptide is Very-long-chain 3-oxoacyl-CoA reductase (IFA38) (Saccharomyces cerevisiae (strain ATCC 204508 / S288c) (Baker's yeast)).